Here is a 255-residue protein sequence, read N- to C-terminus: MTTEPGDRAWVLHHYPYGDTSLIVELFTRTQGRLGVLAKGARRARSALARIEAGRPLWVRWLGRGELPVLAQAEELGPFLPLNPLQNLSLFYVNELLLRLTQRRDPFPDLFQVYEETIDALCSEPGEGWYLRRFERRLLENLGWAPDLAHCAECGRSPDAASSEHWLYQAAHGVFCRAHAPDAAVAIEAAALVWLRGAMQTRSMPVWNSSLRRCLEQELLVHLGGRPLESRRLLTAYLRRTQPAMTIQKREEHSE.

This sequence belongs to the RecO family.

In terms of biological role, involved in DNA repair and RecF pathway recombination. This chain is DNA repair protein RecO, found in Acidithiobacillus ferrooxidans (strain ATCC 23270 / DSM 14882 / CIP 104768 / NCIMB 8455) (Ferrobacillus ferrooxidans (strain ATCC 23270)).